The chain runs to 403 residues: Dual-specificity RNA methyltransferase RlmN (403 aa).

The segment at 1 to 25 (MTKIPMQPADSTPATFHPNAPTKTN) is disordered. Residue E112 is the Proton acceptor of the active site. Residues 123-364 (VNGRKTLCIS…VCTIRQTRGD (242 aa)) enclose the Radical SAM core domain. Cysteines 130 and 370 form a disulfide. [4Fe-4S] cluster-binding residues include C137, C141, and C144. S-adenosyl-L-methionine is bound by residues 193-194 (GE), S225, 247-249 (SLH), and N327. C370 serves as the catalytic S-methylcysteine intermediate.

It belongs to the radical SAM superfamily. RlmN family. [4Fe-4S] cluster is required as a cofactor.

The protein localises to the cytoplasm. The catalysed reaction is adenosine(2503) in 23S rRNA + 2 reduced [2Fe-2S]-[ferredoxin] + 2 S-adenosyl-L-methionine = 2-methyladenosine(2503) in 23S rRNA + 5'-deoxyadenosine + L-methionine + 2 oxidized [2Fe-2S]-[ferredoxin] + S-adenosyl-L-homocysteine. It catalyses the reaction adenosine(37) in tRNA + 2 reduced [2Fe-2S]-[ferredoxin] + 2 S-adenosyl-L-methionine = 2-methyladenosine(37) in tRNA + 5'-deoxyadenosine + L-methionine + 2 oxidized [2Fe-2S]-[ferredoxin] + S-adenosyl-L-homocysteine. Functionally, specifically methylates position 2 of adenine 2503 in 23S rRNA and position 2 of adenine 37 in tRNAs. m2A2503 modification seems to play a crucial role in the proofreading step occurring at the peptidyl transferase center and thus would serve to optimize ribosomal fidelity. The polypeptide is Dual-specificity RNA methyltransferase RlmN (Psychrobacter sp. (strain PRwf-1)).